The following is a 121-amino-acid chain: Large ribosomal subunit protein uL22 (121 aa).

This sequence belongs to the universal ribosomal protein uL22 family. Part of the 50S ribosomal subunit.

Functionally, this protein binds specifically to 23S rRNA; its binding is stimulated by other ribosomal proteins, e.g. L4, L17, and L20. It is important during the early stages of 50S assembly. It makes multiple contacts with different domains of the 23S rRNA in the assembled 50S subunit and ribosome. The globular domain of the protein is located near the polypeptide exit tunnel on the outside of the subunit, while an extended beta-hairpin is found that lines the wall of the exit tunnel in the center of the 70S ribosome. The chain is Large ribosomal subunit protein uL22 from Synechococcus sp. (strain CC9605).